Here is a 193-residue protein sequence, read N- to C-terminus: Large ribosomal subunit protein bL25 (193 aa).

Belongs to the bacterial ribosomal protein bL25 family. CTC subfamily. Part of the 50S ribosomal subunit; part of the 5S rRNA/L5/L18/L25 subcomplex. Contacts the 5S rRNA. Binds to the 5S rRNA independently of L5 and L18.

Its function is as follows. This is one of the proteins that binds to the 5S RNA in the ribosome where it forms part of the central protuberance. The sequence is that of Large ribosomal subunit protein bL25 from Clostridium tetani (strain Massachusetts / E88).